The sequence spans 121 residues: uncharacterized protein (121 aa).

Residues 47–101 (SEVPHYHAEHDLTFTVLKGKGELYLEGEKKKLKEGDWAFIPKGAVHFYRNTSELS) enclose the Cupin type-2 domain.

This is an uncharacterized protein from Aquifex aeolicus (strain VF5).